The primary structure comprises 488 residues: MSDFIASKEDDYSKWYLDIVQKAKLADYSPVKGCMVIMPYGYSIWSKIQSILDKKFKETGHENAYFPMLIPYGFLEKEKDHIEGFSPEFAIIKDAGGESLAEPLVLRPTSETIIWNMYSKWIKSYRDLPLKINQWANVVRWEKRTRPFLRTTEFLWQEGHTAHATEEEAVEETLLILDLYKRFMEDYLAIPVFCGKKSEKEKFAGAVSTYSIEALMQDKKALQAATSHYLGLNFAKAFDVKFQDKDGKMRHVFASSWGISTRLIGALIMVHSDEKGLILPPRIAPIEIIVIPIFKKEDEINKKILDYSDCVVHALKKAEFRVEIDKDVRSSPGFRFSSAEFKGIPIRIEVGINDVLLNSVTIMRRDKDRKFKYQISLDSLASKVKVELDSMQKDLFKKALNFRTLNTKEIFRIGKDSYELFKAYMNDHSGFVLSCWCGGLDCENIIKNETKATIRCIPDDFKAKDLTGMACIYCASRAKYFVLFAKSY.

It belongs to the class-II aminoacyl-tRNA synthetase family. ProS type 3 subfamily. Homodimer.

The protein localises to the cytoplasm. The catalysed reaction is tRNA(Pro) + L-proline + ATP = L-prolyl-tRNA(Pro) + AMP + diphosphate. Catalyzes the attachment of proline to tRNA(Pro) in a two-step reaction: proline is first activated by ATP to form Pro-AMP and then transferred to the acceptor end of tRNA(Pro). In Borrelia garinii subsp. bavariensis (strain ATCC BAA-2496 / DSM 23469 / PBi) (Borreliella bavariensis), this protein is Proline--tRNA ligase.